The following is a 232-amino-acid chain: Octanoyltransferase (232 aa).

Residues 40 to 226 (GSAPERVWLL…TWQDLFGSVP (187 aa)) form the BPL/LPL catalytic domain. Residues 79-86 (RGGQWTYH), 157-159 (ALG), and 170-172 (GVA) contribute to the substrate site. The active-site Acyl-thioester intermediate is C188.

The protein belongs to the LipB family.

Its subcellular location is the cytoplasm. It catalyses the reaction octanoyl-[ACP] + L-lysyl-[protein] = N(6)-octanoyl-L-lysyl-[protein] + holo-[ACP] + H(+). Its pathway is protein modification; protein lipoylation via endogenous pathway; protein N(6)-(lipoyl)lysine from octanoyl-[acyl-carrier-protein]: step 1/2. Catalyzes the transfer of endogenously produced octanoic acid from octanoyl-acyl-carrier-protein onto the lipoyl domains of lipoate-dependent enzymes. Lipoyl-ACP can also act as a substrate although octanoyl-ACP is likely to be the physiological substrate. The sequence is that of Octanoyltransferase from Gluconacetobacter diazotrophicus (strain ATCC 49037 / DSM 5601 / CCUG 37298 / CIP 103539 / LMG 7603 / PAl5).